Consider the following 237-residue polypeptide: Ribonuclease PH (237 aa).

Phosphate-binding positions include Arg86 and 124–126; that span reads GTR.

Belongs to the RNase PH family. In terms of assembly, homohexameric ring arranged as a trimer of dimers.

The enzyme catalyses tRNA(n+1) + phosphate = tRNA(n) + a ribonucleoside 5'-diphosphate. Phosphorolytic 3'-5' exoribonuclease that plays an important role in tRNA 3'-end maturation. Removes nucleotide residues following the 3'-CCA terminus of tRNAs; can also add nucleotides to the ends of RNA molecules by using nucleoside diphosphates as substrates, but this may not be physiologically important. Probably plays a role in initiation of 16S rRNA degradation (leading to ribosome degradation) during starvation. The polypeptide is Ribonuclease PH (Shewanella pealeana (strain ATCC 700345 / ANG-SQ1)).